Consider the following 185-residue polypeptide: TATA-box-binding protein 3 (185 aa).

Repeat copies occupy residues 7 to 84 (IENV…ANKL) and 100 to 178 (VQNI…RKEF).

It belongs to the TBP family.

In terms of biological role, general factor that plays a role in the activation of archaeal genes transcribed by RNA polymerase. Binds specifically to the TATA box promoter element which lies close to the position of transcription initiation. The polypeptide is TATA-box-binding protein 3 (Methanosarcina acetivorans (strain ATCC 35395 / DSM 2834 / JCM 12185 / C2A)).